We begin with the raw amino-acid sequence, 351 residues long: MLKFIQNNREGTALLAILTLFALLGIIDRNYFSLQTFTMIFSSAQILILLAIGATLVMLTRNIDVSVGSITGLCAVTVGMALNAGFGLAASCLFALLVGMVAGFFNGILVTWLRIPAIVATLGTLGLYRGLMLLLTGGKWIEGLPADLKSLSTPILFSISPIGWLTMLLILAMAWLLGKTAFGRSFYATGDNLQGARQLGVRTDSLRIFAFSMNGVMAALAGIVFASQIGFIPNQTGNGLEMKAIAACVLGGISLLGGTGTIIGAILGAFLLTQIDSVLVLLRLPAWWNDFIAGLVLLGVLVFDGRLRCAVERNIRQQKYARFTAQAIISDKKPTVSDNNPAASNKKKAAL.

The next 9 membrane-spanning stretches (helical) occupy residues Leu-14–Leu-34, Met-39–Leu-59, Ile-70–Ala-90, Leu-93–Leu-113, Ile-115–Leu-135, Ile-155–Trp-175, Met-213–Pro-233, Gly-252–Leu-272, and Leu-284–Asp-304.

This sequence belongs to the binding-protein-dependent transport system permease family. AraH/RbsC subfamily. The complex is composed of two ATP-binding proteins (LsrA), two transmembrane proteins (LsrC and LsrD) and a solute-binding protein (LsrB).

The protein localises to the cell inner membrane. Functionally, part of the ABC transporter complex LsrABCD involved in autoinducer 2 (AI-2) import. Probably responsible for the translocation of the substrate across the membrane. The protein is Autoinducer 2 import system permease protein LsrC (lsrC) of Yersinia pestis bv. Antiqua (strain Antiqua).